Reading from the N-terminus, the 549-residue chain is Cation/acetate symporter ActP (549 aa).

Transmembrane regions (helical) follow at residues 33 to 53, 77 to 97, 103 to 123, 148 to 168, 183 to 203, 206 to 226, 262 to 282, 303 to 323, 355 to 375, 404 to 424, 428 to 448, 464 to 484, and 493 to 513; these read WQAI…TYWA, LAIA…ALVF, GLIY…LIAE, ILSA…QMVG, IAVV…GMLA, WVQI…AFMV, ISAL…PHIL, GFMG…IMLV, LFLG…VAGL, VSKI…VLFE, IAFM…PIIL, GGWL…TIWV, and IFPY…GIWF.

It belongs to the sodium:solute symporter (SSF) (TC 2.A.21) family.

It localises to the cell inner membrane. Its function is as follows. Transports acetate. The protein is Cation/acetate symporter ActP of Escherichia fergusonii (strain ATCC 35469 / DSM 13698 / CCUG 18766 / IAM 14443 / JCM 21226 / LMG 7866 / NBRC 102419 / NCTC 12128 / CDC 0568-73).